The following is a 1464-amino-acid chain: Alpha-glucan water dikinase, chloroplastic (1464 aa).

The N-terminal 77 residues, 1–77 (MSNSLGNNLL…KRAFSSSPHA (77 aa)), are a transit peptide targeting the chloroplast. H1069 serves as the catalytic Tele-phosphohistidine intermediate.

Belongs to the PEP-utilizing enzyme family. Homodimer. The cofactor is Mg(2+). In terms of tissue distribution, expressed in leaves.

Its subcellular location is the plastid. It is found in the chloroplast. The catalysed reaction is [(1-&gt;4)-alpha-D-glucosyl](n) + n ATP + n H2O = [(1-&gt;4)-6-phospho-alpha-D-glucosyl](n) + n AMP + n phosphate + 2n H(+). The enzyme catalyses ATP + protein L-histidine = ADP + protein N-phospho-L-histidine.. Its function is as follows. Mediates the incorporation of phosphate into starch-like alpha-glucan, mostly at the C-6 position of glucose units. Acts as an overall regulator of starch mobilization. Required for starch degradation, suggesting that the phosphate content of starch regulates its degradability. More active on alpha-1,6 branched amylopectin. This Solanum tuberosum (Potato) protein is Alpha-glucan water dikinase, chloroplastic (R1).